Reading from the N-terminus, the 54-residue chain is Phosphoribosylformylglycinamidine synthase subunit PurQ (54 aa).

In terms of domain architecture, Glutamine amidotransferase type-1 spans 1–51 (MHDIAGVTNETGNVLGMMPHPERAVEALLGGTDGLGVFQSLINQTEGADVR). Active-site residues include His-20 and Glu-22.

In terms of assembly, part of the FGAM synthase complex composed of 1 PurL, 1 PurQ and 2 PurS subunits.

The protein localises to the cytoplasm. The enzyme catalyses N(2)-formyl-N(1)-(5-phospho-beta-D-ribosyl)glycinamide + L-glutamine + ATP + H2O = 2-formamido-N(1)-(5-O-phospho-beta-D-ribosyl)acetamidine + L-glutamate + ADP + phosphate + H(+). The catalysed reaction is L-glutamine + H2O = L-glutamate + NH4(+). It functions in the pathway purine metabolism; IMP biosynthesis via de novo pathway; 5-amino-1-(5-phospho-D-ribosyl)imidazole from N(2)-formyl-N(1)-(5-phospho-D-ribosyl)glycinamide: step 1/2. In terms of biological role, part of the phosphoribosylformylglycinamidine synthase complex involved in the purines biosynthetic pathway. Catalyzes the ATP-dependent conversion of formylglycinamide ribonucleotide (FGAR) and glutamine to yield formylglycinamidine ribonucleotide (FGAM) and glutamate. The FGAM synthase complex is composed of three subunits. PurQ produces an ammonia molecule by converting glutamine to glutamate. PurL transfers the ammonia molecule to FGAR to form FGAM in an ATP-dependent manner. PurS interacts with PurQ and PurL and is thought to assist in the transfer of the ammonia molecule from PurQ to PurL. The chain is Phosphoribosylformylglycinamidine synthase subunit PurQ (purQ) from Lacticaseibacillus casei (Lactobacillus casei).